The primary structure comprises 352 residues: Guanine nucleotide-binding protein alpha-7 subunit (352 aa).

G2 carries N-myristoyl glycine lipidation. C4 carries S-palmitoyl cysteine lipidation. A G-alpha domain is found at 32-352 (RIIKLLLLGA…AKNLKSMGLC (321 aa)). The segment at 35-48 (KLLLLGAGESGKST) is G1 motif. Residues 40 to 47 (GAGESGKS), 174 to 180 (LRTRIKT), 199 to 203 (DVGGQ), 268 to 271 (NKKD), and A324 contribute to the GTP site. Residues S47 and T180 each coordinate Mg(2+). The interval 172 to 180 (DLLRTRIKT) is G2 motif. The tract at residues 195–204 (FRVIDVGGQR) is G3 motif. Positions 264–271 (ILFLNKKD) are G4 motif. The interval 322–327 (TCATDT) is G5 motif.

The protein belongs to the G-alpha family. G(i/o/t/z) subfamily. As to quaternary structure, g proteins are composed of 3 units; alpha, beta and gamma. The alpha chain contains the guanine nucleotide binding site.

Guanine nucleotide-binding proteins (G proteins) are involved as modulators or transducers in various transmembrane signaling systems. This Caenorhabditis briggsae protein is Guanine nucleotide-binding protein alpha-7 subunit (gpa-7).